The primary structure comprises 220 residues: HTH-type transcriptional repressor GlaR (220 aa).

The HTH gntR-type domain occupies 1–69; the sequence is MTITSLDGYR…NQKGYRVASM (69 aa). The segment at residues 29-48 is a DNA-binding region (H-T-H motif); that stretch reads MSLLTSRYALGVGPLREALS.

The protein resides in the cytoplasm. The repressive effect at the glaH promoter site is specifically relieved upon glutarate binding. In terms of biological role, negatively regulates the expression of the glaH-lhgD-gabDTP operon in a temporal manner during entry into stationary phase or during the first few hours of carbon starvation. Thereby is involved in the regulation of a L-lysine degradation pathway that proceeds via cadaverine, glutarate and L-2-hydroxyglutarate. Binds to two primary and two secondary sites in the promoter region of the glaH operon with the consensus sequences TTGTN5TTTT and ATGTN5TTTT of the primary sites, each separated by six nucleotides. This is HTH-type transcriptional repressor GlaR from Escherichia coli (strain K12).